A 517-amino-acid polypeptide reads, in one-letter code: Serine hydroxymethyltransferase 2, mitochondrial (517 aa).

The N-terminal 31 residues, 1-31, are a transit peptide targeting the mitochondrion; the sequence is MAMASALRRLSSSSNKPLQRLFNGGHLYSMS. Lysine 287 bears the N6-(pyridoxal phosphate)lysine mark.

The protein belongs to the SHMT family. In terms of assembly, homotetramer. Pyridoxal 5'-phosphate serves as cofactor.

Its subcellular location is the mitochondrion. It carries out the reaction (6R)-5,10-methylene-5,6,7,8-tetrahydrofolate + glycine + H2O = (6S)-5,6,7,8-tetrahydrofolate + L-serine. It participates in one-carbon metabolism; tetrahydrofolate interconversion. Catalyzes the interconversion of serine and glycine. The polypeptide is Serine hydroxymethyltransferase 2, mitochondrial (Flaveria pringlei).